A 438-amino-acid polypeptide reads, in one-letter code: Trigger factor (438 aa).

The region spanning 160-245 (DDKVTIDFVG…VKKIQQAELP (86 aa)) is the PPIase FKBP-type domain.

Belongs to the FKBP-type PPIase family. Tig subfamily.

The protein localises to the cytoplasm. It catalyses the reaction [protein]-peptidylproline (omega=180) = [protein]-peptidylproline (omega=0). Involved in protein export. Acts as a chaperone by maintaining the newly synthesized protein in an open conformation. Functions as a peptidyl-prolyl cis-trans isomerase. This chain is Trigger factor, found in Francisella tularensis subsp. tularensis (strain FSC 198).